The primary structure comprises 508 residues: Maturase K (508 aa).

Belongs to the intron maturase 2 family. MatK subfamily.

It is found in the plastid. The protein localises to the chloroplast. Usually encoded in the trnK tRNA gene intron. Probably assists in splicing its own and other chloroplast group II introns. This chain is Maturase K, found in Manilkara zapota (Sapodilla plum).